The following is a 323-amino-acid chain: tRNA uridine(34) hydroxylase (323 aa).

The Rhodanese domain occupies S123–S217. Catalysis depends on C177, which acts as the Cysteine persulfide intermediate.

It belongs to the TrhO family.

The catalysed reaction is uridine(34) in tRNA + AH2 + O2 = 5-hydroxyuridine(34) in tRNA + A + H2O. In terms of biological role, catalyzes oxygen-dependent 5-hydroxyuridine (ho5U) modification at position 34 in tRNAs. In Methylobacillus flagellatus (strain ATCC 51484 / DSM 6875 / VKM B-1610 / KT), this protein is tRNA uridine(34) hydroxylase.